A 448-amino-acid polypeptide reads, in one-letter code: Putative carbonic anhydrase 2 (448 aa).

The Alpha-carbonic anhydrase domain occupies 1–222 (AYRQTENLLY…PAERDVFRII (222 aa)). His19 is a Zn(2+) binding site. Asn139 and Asn198 each carry an N-linked (GlcNAc...) asparagine glycan. The disordered stretch occupies residues 229-448 (RREEDDERGD…DKGDDKGDDN (220 aa)). Residues 245–280 (DDDDNYDDDDYYNDDYSNDDYYDDDYYYDDYDDDTD) are compositionally biased toward acidic residues. Composition is skewed to basic and acidic residues over residues 281 to 334 (DDHK…DDSG) and 342 to 354 (RDGR…RDRN). A glycan (N-linked (GlcNAc...) asparagine) is linked at Asn314. The span at 357 to 368 (NGNGRENGGVRG) shows a compositional bias: gly residues. Positions 370 to 379 (GNDRDGRRDN) are enriched in basic and acidic residues. The N-linked (GlcNAc...) asparagine glycan is linked to Asn385. Basic and acidic residues predominate over residues 386 to 421 (GTRRGNGDDRGGRRNEDRGENRRGKDDQERESEDGR). Residues 422–435 (RRRRRFNGRRRRRG) show a composition bias toward basic residues. Positions 436 to 448 (RGDDKGDDKGDDN) are enriched in basic and acidic residues.

The protein belongs to the alpha-carbonic anhydrase family. Component of the acid-insoluble and acid-soluble organic matrix of calcified layers of the shell (at protein level).

It localises to the secreted. The catalysed reaction is hydrogencarbonate + H(+) = CO2 + H2O. Reversible hydration of carbon dioxide. This is Putative carbonic anhydrase 2 from Lottia gigantea (Giant owl limpet).